The chain runs to 113 residues: Ribosome-binding factor A (113 aa).

The protein belongs to the RbfA family. In terms of assembly, monomer. Binds 30S ribosomal subunits, but not 50S ribosomal subunits or 70S ribosomes.

The protein resides in the cytoplasm. One of several proteins that assist in the late maturation steps of the functional core of the 30S ribosomal subunit. Associates with free 30S ribosomal subunits (but not with 30S subunits that are part of 70S ribosomes or polysomes). Required for efficient processing of 16S rRNA. May interact with the 5'-terminal helix region of 16S rRNA. The protein is Ribosome-binding factor A of Lactococcus lactis subsp. cremoris (Streptococcus cremoris).